A 148-amino-acid polypeptide reads, in one-letter code: uncharacterized protein (148 aa).

The HTH asnC-type domain maps to L2–E63. The segment at residues Y21–K40 is a DNA-binding region (H-T-H motif).

This is an uncharacterized protein from Pyrococcus furiosus (strain ATCC 43587 / DSM 3638 / JCM 8422 / Vc1).